A 78-amino-acid polypeptide reads, in one-letter code: Large ribosomal subunit protein bL28 (78 aa).

A disordered region spans residues 1–23 (MSRVCQVTGKRPITGNNVSHSKR).

It belongs to the bacterial ribosomal protein bL28 family.

This is Large ribosomal subunit protein bL28 from Marinomonas sp. (strain MWYL1).